The chain runs to 392 residues: SH3 domain-binding protein 5-like (392 aa).

Residues 1-57 (MADLKKAAGGRETPQGELRSEVVEDEGPRSPVAEEPGGSGSNSSETKLSPREEEELD) are disordered. Thr-13 is subject to Phosphothreonine. Residues 18–28 (LRSEVVEDEGP) are compositionally biased toward basic and acidic residues. 2 positions are modified to phosphoserine: Ser-30 and Ser-49. Coiled-coil stretches lie at residues 59–140 (RIQE…YERA) and 169–272 (WQEM…EQIH). The segment at 275–332 (RRGLPPHPLGPRRSSPVGAEAGPEGIEDGDSGIEGAEGGGLEEGSSLGPGPGPDTDTL) is disordered. The segment covering 317–332 (EGSSLGPGPGPDTDTL) has biased composition (low complexity). 5 positions are modified to phosphoserine: Ser-342, Ser-349, Ser-357, Ser-361, and Ser-377. The segment at 364–392 (GQELGAQSRGRRGSDIGVRGGRHQRSVSL) is disordered. The span at 383-392 (GGRHQRSVSL) shows a compositional bias: basic residues.

Belongs to the SH3BP5 family.

Functionally, functions as a guanine nucleotide exchange factor (GEF) for RAB11A. The protein is SH3 domain-binding protein 5-like (Sh3bp5l) of Mus musculus (Mouse).